The following is a 265-amino-acid chain: MTDLLTAAVLGLVEGLTEFLPVSSTGHLIITGYLLEYTGPKAESFQVAIQLGAILAVVFLYKERFAALFRFGTGHGRFSGLRGWYLLALTSAPASVLGLLTHSFIKEHLFGPVTVAWALAAGALYILAVEHKGEGTRYETLDDVSPALALGIGMFQCLALWPGFSRSAATIMGALLLGSRRRLAAEYSFVAAVPIMFAATGYDMYKSYSLFSPADIPFWAVGLLVSFASAWAAVKGFIHLVGRVTFRPFAWYRLALAPVVLLFWS.

The next 8 helical transmembrane spans lie at 15–37, 41–61, 85–105, 109–129, 144–164, 183–203, 218–238, and 244–264; these read GLTE…LLEY, KAES…VFLY, YLLA…HSFI, LFGP…ILAV, VSPA…WPGF, LAAE…TGYD, FWAV…KGFI, and VTFR…LLFW.

It belongs to the UppP family.

The protein localises to the cell inner membrane. The catalysed reaction is di-trans,octa-cis-undecaprenyl diphosphate + H2O = di-trans,octa-cis-undecaprenyl phosphate + phosphate + H(+). Functionally, catalyzes the dephosphorylation of undecaprenyl diphosphate (UPP). Confers resistance to bacitracin. The sequence is that of Undecaprenyl-diphosphatase from Oleidesulfovibrio alaskensis (strain ATCC BAA-1058 / DSM 17464 / G20) (Desulfovibrio alaskensis).